We begin with the raw amino-acid sequence, 232 residues long: Large ribosomal subunit protein uL1 (232 aa).

It belongs to the universal ribosomal protein uL1 family. As to quaternary structure, part of the 50S ribosomal subunit.

Functionally, binds directly to 23S rRNA. The L1 stalk is quite mobile in the ribosome, and is involved in E site tRNA release. In terms of biological role, protein L1 is also a translational repressor protein, it controls the translation of the L11 operon by binding to its mRNA. The protein is Large ribosomal subunit protein uL1 of Colwellia psychrerythraea (strain 34H / ATCC BAA-681) (Vibrio psychroerythus).